Reading from the N-terminus, the 242-residue chain is Coat protein (242 aa).

Over residues 1 to 16 (MGDQPRPPVPPAPGSN) the composition is skewed to pro residues. 2 disordered regions span residues 1–41 (MGDQ…VANQ) and 219–242 (SNST…GPDA). Over residues 219-232 (SNSTLLTKGASRST) the composition is skewed to polar residues.

This sequence belongs to the potexvirus capsid protein family.

Its subcellular location is the virion. Functionally, required for genome encapsidation. Forms ribonucleoprotein complexes along with TGB1 helicase and viral RNA. This is Coat protein from Strawberry mild yellow edge-associated virus (SMYEaV).